A 196-amino-acid polypeptide reads, in one-letter code: Pro-FMRFamide-related neuropeptide VF (196 aa).

The N-terminal stretch at 1–21 (MEIISLKRFILLMLATSSLLT) is a signal peptide. Residues 22–57 (SNIFCTDESRMPNLYSKKNYDKYSEPRGDLGWEKER) constitute a propeptide that is removed on maturation. Phe92 bears the Phenylalanine amide mark. Propeptides lie at residues 95 to 99 (NMEEE) and 115 to 121 (NREDSLS). Phe131 is modified (phenylalanine amide). A propeptide spanning residues 134-196 (TTTAKSITKT…IDDAELKQEK (63 aa)) is cleaved from the precursor.

It belongs to the FARP (FMRFamide related peptide) family.

It is found in the secreted. Its function is as follows. Efficiently inhibits forskolin-induced production of cAMP. Acts as a potent negative regulator of gonadotropin synthesis and secretion. Induces secretion of prolactin. Functionally, efficiently inhibits forskolin-induced production of cAMP. Blocks morphine-induced analgesia. Shows no inhibitory activity of forskolin-induced production of cAMP. This Bos taurus (Bovine) protein is Pro-FMRFamide-related neuropeptide VF (NPVF).